Consider the following 220-residue polypeptide: Uracil-DNA glycosylase (220 aa).

The Proton acceptor role is filled by D65.

Belongs to the uracil-DNA glycosylase (UDG) superfamily. UNG family.

The protein resides in the cytoplasm. The catalysed reaction is Hydrolyzes single-stranded DNA or mismatched double-stranded DNA and polynucleotides, releasing free uracil.. In terms of biological role, excises uracil residues from the DNA which can arise as a result of misincorporation of dUMP residues by DNA polymerase or due to deamination of cytosine. In Amoebophilus asiaticus (strain 5a2), this protein is Uracil-DNA glycosylase.